Consider the following 369-residue polypeptide: Cobalt-precorrin-5B C(1)-methyltransferase (369 aa).

The protein belongs to the CbiD family.

It carries out the reaction Co-precorrin-5B + S-adenosyl-L-methionine = Co-precorrin-6A + S-adenosyl-L-homocysteine. It functions in the pathway cofactor biosynthesis; adenosylcobalamin biosynthesis; cob(II)yrinate a,c-diamide from sirohydrochlorin (anaerobic route): step 6/10. Functionally, catalyzes the methylation of C-1 in cobalt-precorrin-5B to form cobalt-precorrin-6A. The chain is Cobalt-precorrin-5B C(1)-methyltransferase from Brucella melitensis biotype 2 (strain ATCC 23457).